Reading from the N-terminus, the 376-residue chain is Arabinogalactan endo-beta-1,4-galactanase (376 aa).

Residues 1–17 form the signal peptide; sequence MKKKILAATAILLAAIA. E161 acts as the Proton donor in catalysis. The active-site Nucleophile is E270. Residues D281 and N285 each contribute to the Ca(2+) site.

The protein belongs to the glycosyl hydrolase 53 family. The cofactor is Ca(2+).

It catalyses the reaction The enzyme specifically hydrolyzes (1-&gt;4)-beta-D-galactosidic linkages in type I arabinogalactans.. The chain is Arabinogalactan endo-beta-1,4-galactanase (ganB) from Cellvibrio japonicus (strain Ueda107) (Pseudomonas fluorescens subsp. cellulosa).